Consider the following 140-residue polypeptide: Pro-Viral epidermal growth factor (140 aa).

A signal peptide spans 1-18; that stretch reads MSMKYLMLLFAAMIIRSF. Over 19-100 the chain is Extracellular; the sequence is ADSGNAIETT…SENPNTTTSY (82 aa). Residue N34 is glycosylated (N-linked (GlcNAc...) asparagine; by host). The 41-residue stretch at 41–81 folds into the EGF-like domain; it reads AIRLCGPEGDGYCLHGDCIHARDIDGMYCRCSHGYTGIRCQ. Disulfide bonds link C45–C58, C53–C69, and C71–C80. An N-linked (GlcNAc...) asparagine; by host glycan is attached at N95. Residues 101–121 form a helical membrane-spanning segment; the sequence is IPSPGIMLVLVGIIIITCCLL. Over 122–140 the chain is Cytoplasmic; sequence SVYRFTRRTKLPIQDMVVP.

It belongs to the orthopoxvirus OPG019 family. In terms of assembly, viral epidermal growth factor interacts with host EGFR and promotes EGFR dimerization. In terms of processing, cleaved at the cell surface by host ADAM10, thereby releasing the secreted form of VGF.

It is found in the host membrane. It localises to the secreted. Its function is as follows. Stimulates cellular proliferation (hyperplasia)and mobility around infected cells to promote rapid and efficient spread of infection. This effect is beneficial for virus replication in vivo, because poxviruses replicate possibly better in proliferating cells than in quiescent cells. Acts by binding host EGFR, inducing its dimerization, autophosphorylation and leading to activation of several cellular pathways regulating cell proliferation or cell survival. The activation by host EGFR of mitogen activated protein kinases (MAPK) and extracellular-signal regulated kinases (ERK) are essential for the positive effect of vaccinia growth factor on poxvirus virulence in vivo. This chain is Pro-Viral epidermal growth factor (OPG019), found in Bos taurus (Bovine).